Reading from the N-terminus, the 373-residue chain is T-protein (373 aa).

The Chorismate mutase domain maps to 1 to 90 (MVAELTALRD…ESYTSENDKG (90 aa)). The region spanning 99–361 (RPVVIVGGKG…DHAKRFLVES (263 aa)) is the Prephenate/arogenate dehydrogenase domain.

The protein in the C-terminal section; belongs to the prephenate/arogenate dehydrogenase family.

Its subcellular location is the cytoplasm. It catalyses the reaction chorismate = prephenate. The catalysed reaction is prephenate + NAD(+) = 3-(4-hydroxyphenyl)pyruvate + CO2 + NADH. It functions in the pathway amino-acid biosynthesis; L-tyrosine biosynthesis; (4-hydroxyphenyl)pyruvate from prephenate (NAD(+) route): step 1/1. The protein operates within metabolic intermediate biosynthesis; prephenate biosynthesis; prephenate from chorismate: step 1/1. The polypeptide is T-protein (tyrA) (Enterobacter agglomerans (Erwinia herbicola)).